We begin with the raw amino-acid sequence, 341 residues long: N-acetyl-gamma-glutamyl-phosphate reductase (341 aa).

Cysteine 151 is a catalytic residue.

This sequence belongs to the NAGSA dehydrogenase family. Type 1 subfamily.

It is found in the cytoplasm. It carries out the reaction N-acetyl-L-glutamate 5-semialdehyde + phosphate + NADP(+) = N-acetyl-L-glutamyl 5-phosphate + NADPH + H(+). It participates in amino-acid biosynthesis; L-arginine biosynthesis; N(2)-acetyl-L-ornithine from L-glutamate: step 3/4. Functionally, catalyzes the NADPH-dependent reduction of N-acetyl-5-glutamyl phosphate to yield N-acetyl-L-glutamate 5-semialdehyde. This is N-acetyl-gamma-glutamyl-phosphate reductase from Chlorobaculum tepidum (strain ATCC 49652 / DSM 12025 / NBRC 103806 / TLS) (Chlorobium tepidum).